A 373-amino-acid chain; its full sequence is Histidinol-phosphate aminotransferase (373 aa).

At Lys-231 the chain carries N6-(pyridoxal phosphate)lysine.

It belongs to the class-II pyridoxal-phosphate-dependent aminotransferase family. Histidinol-phosphate aminotransferase subfamily. Pyridoxal 5'-phosphate serves as cofactor.

It carries out the reaction L-histidinol phosphate + 2-oxoglutarate = 3-(imidazol-4-yl)-2-oxopropyl phosphate + L-glutamate. Its pathway is amino-acid biosynthesis; L-histidine biosynthesis; L-histidine from 5-phospho-alpha-D-ribose 1-diphosphate: step 7/9. This chain is Histidinol-phosphate aminotransferase (hisC), found in Methanocaldococcus jannaschii (strain ATCC 43067 / DSM 2661 / JAL-1 / JCM 10045 / NBRC 100440) (Methanococcus jannaschii).